The following is a 458-amino-acid chain: Chromosomal replication initiator protein DnaA (458 aa).

Residues 1 to 84 form a domain I, interacts with DnaA modulators region; that stretch reads MENIWLEAQT…FHVAEEKPEA (84 aa). Residues 80 to 119 show a composition bias toward basic and acidic residues; sequence EKPEAAHEAKPEKEAKPAREKERDKDKEKEKDREKEKKEL. The disordered stretch occupies residues 80 to 120; the sequence is EKPEAAHEAKPEKEAKPAREKERDKDKEKEKDREKEKKELV. The segment at 84-121 is domain II; sequence AAHEAKPEKEAKPAREKERDKDKEKEKDREKEKKELVP. A domain III, AAA+ region region spans residues 122-338; sequence NLNPKYTFES…GMLIRLEAFA (217 aa). ATP is bound by residues Gly166, Gly168, Lys169, and Thr170. The tract at residues 339–458 is domain IV, binds dsDNA; the sequence is SLTGQEITLS…VEDIRKKLFT (120 aa).

This sequence belongs to the DnaA family. Oligomerizes as a right-handed, spiral filament on DNA at oriC.

It is found in the cytoplasm. Plays an essential role in the initiation and regulation of chromosomal replication. ATP-DnaA binds to the origin of replication (oriC) to initiate formation of the DNA replication initiation complex once per cell cycle. Binds the DnaA box (a 9 base pair repeat at the origin) and separates the double-stranded (ds)DNA. Forms a right-handed helical filament on oriC DNA; dsDNA binds to the exterior of the filament while single-stranded (ss)DNA is stabiized in the filament's interior. The ATP-DnaA-oriC complex binds and stabilizes one strand of the AT-rich DNA unwinding element (DUE), permitting loading of DNA polymerase. After initiation quickly degrades to an ADP-DnaA complex that is not apt for DNA replication. Binds acidic phospholipids. The polypeptide is Chromosomal replication initiator protein DnaA (Citrifermentans bemidjiense (strain ATCC BAA-1014 / DSM 16622 / JCM 12645 / Bem) (Geobacter bemidjiensis)).